The chain runs to 220 residues: Probable cytidylate kinase (220 aa).

10–18 (GPAASGKSS) is an ATP binding site.

The protein belongs to the cytidylate kinase family. Type 1 subfamily.

The enzyme catalyses CMP + ATP = CDP + ADP. The catalysed reaction is dCMP + ATP = dCDP + ADP. The sequence is that of Probable cytidylate kinase from Encephalitozoon cuniculi (strain GB-M1) (Microsporidian parasite).